A 540-amino-acid chain; its full sequence is O-phosphoserine--tRNA(Cys) ligase (540 aa).

Residues 188 to 190, 233 to 235, 275 to 276, and Asn319 contribute to the substrate site; these read HMT, SAS, and YY.

This sequence belongs to the class-II aminoacyl-tRNA synthetase family. O-phosphoseryl-tRNA(Cys) synthetase subfamily. As to quaternary structure, homotetramer. Interacts with SepCysS.

It catalyses the reaction tRNA(Cys) + O-phospho-L-serine + ATP = O-phospho-L-seryl-tRNA(Cys) + AMP + diphosphate. Catalyzes the attachment of O-phosphoserine (Sep) to tRNA(Cys). The polypeptide is O-phosphoserine--tRNA(Cys) ligase (Methanococcus aeolicus (strain ATCC BAA-1280 / DSM 17508 / OCM 812 / Nankai-3)).